Reading from the N-terminus, the 605-residue chain is Elongation factor 4 (605 aa).

One can recognise a tr-type G domain in the interval 9–192 (GMIRNFCIIA…AIVQRIPAPA (184 aa)). GTP contacts are provided by residues 21 to 26 (DHGKST) and 139 to 142 (NKID).

This sequence belongs to the TRAFAC class translation factor GTPase superfamily. Classic translation factor GTPase family. LepA subfamily.

The protein resides in the cell inner membrane. It catalyses the reaction GTP + H2O = GDP + phosphate + H(+). Required for accurate and efficient protein synthesis under certain stress conditions. May act as a fidelity factor of the translation reaction, by catalyzing a one-codon backward translocation of tRNAs on improperly translocated ribosomes. Back-translocation proceeds from a post-translocation (POST) complex to a pre-translocation (PRE) complex, thus giving elongation factor G a second chance to translocate the tRNAs correctly. Binds to ribosomes in a GTP-dependent manner. This chain is Elongation factor 4, found in Chlorobaculum parvum (strain DSM 263 / NCIMB 8327) (Chlorobium vibrioforme subsp. thiosulfatophilum).